Consider the following 286-residue polypeptide: ATP synthase gamma chain (286 aa).

It belongs to the ATPase gamma chain family. As to quaternary structure, F-type ATPases have 2 components, CF(1) - the catalytic core - and CF(0) - the membrane proton channel. CF(1) has five subunits: alpha(3), beta(3), gamma(1), delta(1), epsilon(1). CF(0) has three main subunits: a, b and c.

The protein localises to the cell inner membrane. Produces ATP from ADP in the presence of a proton gradient across the membrane. The gamma chain is believed to be important in regulating ATPase activity and the flow of protons through the CF(0) complex. In Shewanella sp. (strain ANA-3), this protein is ATP synthase gamma chain.